The primary structure comprises 317 residues: Transaldolase (317 aa).

The Schiff-base intermediate with substrate role is filled by Lys-132.

This sequence belongs to the transaldolase family. Type 1 subfamily. Homodimer.

It localises to the cytoplasm. The enzyme catalyses D-sedoheptulose 7-phosphate + D-glyceraldehyde 3-phosphate = D-erythrose 4-phosphate + beta-D-fructose 6-phosphate. It functions in the pathway carbohydrate degradation; pentose phosphate pathway; D-glyceraldehyde 3-phosphate and beta-D-fructose 6-phosphate from D-ribose 5-phosphate and D-xylulose 5-phosphate (non-oxidative stage): step 2/3. Its function is as follows. Transaldolase is important for the balance of metabolites in the pentose-phosphate pathway. The protein is Transaldolase of Yersinia pseudotuberculosis serotype O:3 (strain YPIII).